The chain runs to 82 residues: T-complex protein 1 subunit gamma (82 aa).

Gly15 contributes to the ADP binding site. ATP is bound at residue Gly15. Asp66 is a Mg(2+) binding site. ADP contacts are provided by Gly67, Thr68, Thr69, and Ser70. Positions 67, 68, and 69 each coordinate ATP.

It belongs to the TCP-1 chaperonin family. As to quaternary structure, component of the chaperonin-containing T-complex (TRiC), a hexadecamer composed of two identical back-to-back stacked rings enclosing a protein folding chamber. Each ring is made up of eight different subunits: TCP1/CCT1, CCT2, CCT3, CCT4, CCT5, CCT6A/CCT6, CCT7, CCT8. Interacts with PACRG. Interacts with DNAAF4. Interacts with DLEC1.

Its subcellular location is the cytoplasm. The enzyme catalyses ATP + H2O = ADP + phosphate + H(+). In terms of biological role, component of the chaperonin-containing T-complex (TRiC), a molecular chaperone complex that assists the folding of actin, tubulin and other proteins upon ATP hydrolysis. The TRiC complex mediates the folding of WRAP53/TCAB1, thereby regulating telomere maintenance. As part of the TRiC complex may play a role in the assembly of BBSome, a complex involved in ciliogenesis regulating transports vesicles to the cilia. The sequence is that of T-complex protein 1 subunit gamma (CCT3) from Sus scrofa (Pig).